The chain runs to 227 residues: Ribose-5-phosphate isomerase A (227 aa).

Residues Thr-26–Thr-29, Asp-82–Asp-85, and Lys-95–Gly-98 each bind substrate. Glu-104 functions as the Proton acceptor in the catalytic mechanism. Residue Lys-122 coordinates substrate.

It belongs to the ribose 5-phosphate isomerase family. In terms of assembly, homodimer.

The catalysed reaction is aldehydo-D-ribose 5-phosphate = D-ribulose 5-phosphate. It participates in carbohydrate degradation; pentose phosphate pathway; D-ribose 5-phosphate from D-ribulose 5-phosphate (non-oxidative stage): step 1/1. In terms of biological role, catalyzes the reversible conversion of ribose-5-phosphate to ribulose 5-phosphate. This chain is Ribose-5-phosphate isomerase A, found in Streptococcus pyogenes serotype M28 (strain MGAS6180).